A 63-amino-acid polypeptide reads, in one-letter code: Large ribosomal subunit protein uL30 (63 aa).

It belongs to the universal ribosomal protein uL30 family. In terms of assembly, part of the 50S ribosomal subunit.

This is Large ribosomal subunit protein uL30 from Xylella fastidiosa (strain M23).